Reading from the N-terminus, the 164-residue chain is Hydroxylaminobenzene mutase HabB (164 aa).

4 helical membrane passes run L16–M36, G50–G70, F78–W98, and L121–L141.

Its subcellular location is the cell membrane. The catalysed reaction is N-phenylhydroxylamine = 2-aminophenol. Its activity is regulated as follows. Addition of ZnSO(4) decreases the activity to 70%. In terms of biological role, catalyzes the rearrangement of hydroxylaminobenzene to 2-aminophenol. This is Hydroxylaminobenzene mutase HabB (habB) from Ectopseudomonas oleovorans (Pseudomonas oleovorans).